A 761-amino-acid polypeptide reads, in one-letter code: Isocyanide synthase xanB (761 aa).

The tract at residues 24 to 128 is disordered; the sequence is LLGSYETKAP…GKGTKADPSH (105 aa). The span at 36-48 shows a compositional bias: low complexity; it reads ETSEIAASSSSSE. Polar residues predominate over residues 93–102; the sequence is TVSTPQSSDN. Over residues 115–126 the composition is skewed to basic and acidic residues; that stretch reads FKDEGKGTKADP.

This sequence belongs to the isocyanide synthase family.

The protein operates within secondary metabolite biosynthesis. Functionally, isocyanide synthase; part of the gene cluster that mediates the biosynthesis of the isocyanide xanthocillin and its derivatives. The first step of the pathway consists in the conversion of tyrosine into a vinyl-isonitrile intermediate by the isocyanide synthase xanB. Subsequent oxidative dimerization of this intermediate to form xanthocillin may involve the cytochrome P450 monooxygenase xanG, whose expression is coregulated with that of XanB. Xanthocillin can be further modified by the isonitrile hydratase-like protein xanA which introduces N-formyl groups and the methyltransferase xanE which introduces methyl groups, leading to the production of several derivatives including fumiformamide. Finally, fumiformamide can be subject to both oxidative and reductive cyclization to yield melanocins E and F, respectively. The chain is Isocyanide synthase xanB from Aspergillus fumigatus (strain ATCC MYA-4609 / CBS 101355 / FGSC A1100 / Af293) (Neosartorya fumigata).